Consider the following 132-residue polypeptide: Mite allergen Der p 5 (132 aa).

Immunodominant conformational IgE-binding epitope stretches follow at residues 25–53 (DYQN…FYLQ) and 102–132 (EQYN…KIEV).

The protein belongs to the mite group 5 allergen family. In terms of assembly, monomer. Trimer of homodimers. Oligomerizes in a concentration-dependent manner.

The protein is Mite allergen Der p 5 (DERP5) of Dermatophagoides pteronyssinus (European house dust mite).